The primary structure comprises 325 residues: MSETATWQPSASVPNLLKRAAIMTEIRRFFADRGVLEVETPCMSQATVTDIHLFPFETRFVGPGHSQGMNLYLMTSPEYHMKRLLAAGCGPVFQLCRSFRNEEMGRYHNPEFTMLEWYRPHYDMYRLMNEVDDLLQQVLDCQPAESLSYQQAFQRHLEIDPLSADKTQLREAAAKLDVSNIADTEEDRDTLLQLLFTVGVEPHIGKEKPTFIYHFPASQASLAQISTEDHRVAERFEVYYKGIELANGFHELTDAREQQQRFEQDNRKRAARGLPQQPIDNHLLDALKAGMPDCSGVALGVDRLVMLALGAERLADVIAFTVDRA.

76-78 (SPE) serves as a coordination point for substrate. Residues 100-102 (RNE) and Asn109 contribute to the ATP site. Substrate is bound at residue Tyr118. 244-245 (EL) serves as a coordination point for ATP. Glu251 lines the substrate pocket. Position 300 (Gly300) interacts with ATP.

It belongs to the class-II aminoacyl-tRNA synthetase family. EpmA subfamily. In terms of assembly, homodimer.

The enzyme catalyses D-beta-lysine + L-lysyl-[protein] + ATP = N(6)-((3R)-3,6-diaminohexanoyl)-L-lysyl-[protein] + AMP + diphosphate + H(+). Its function is as follows. With EpmB is involved in the beta-lysylation step of the post-translational modification of translation elongation factor P (EF-P) on 'Lys-34'. Catalyzes the ATP-dependent activation of (R)-beta-lysine produced by EpmB, forming a lysyl-adenylate, from which the beta-lysyl moiety is then transferred to the epsilon-amino group of EF-P 'Lys-34'. This chain is Elongation factor P--(R)-beta-lysine ligase, found in Salmonella arizonae (strain ATCC BAA-731 / CDC346-86 / RSK2980).